Here is a 367-residue protein sequence, read N- to C-terminus: tRNA-specific 2-thiouridylase MnmA (367 aa).

ATP-binding positions include 11–18 and Met37; that span reads AMSGGVDS. An interaction with target base in tRNA region spans residues 97-99; the sequence is NPD. Cys102 functions as the Nucleophile in the catalytic mechanism. A disulfide bond links Cys102 and Cys199. Residue Gly127 participates in ATP binding. Residues 149–151 are interaction with tRNA; the sequence is KDQ. The active-site Cysteine persulfide intermediate is Cys199. The segment at 311-312 is interaction with tRNA; the sequence is RY.

Belongs to the MnmA/TRMU family. As to quaternary structure, interacts with TusE.

The protein resides in the cytoplasm. The enzyme catalyses S-sulfanyl-L-cysteinyl-[protein] + uridine(34) in tRNA + AH2 + ATP = 2-thiouridine(34) in tRNA + L-cysteinyl-[protein] + A + AMP + diphosphate + H(+). Its function is as follows. Catalyzes the 2-thiolation of uridine at the wobble position (U34) of tRNA(Lys), tRNA(Glu) and tRNA(Gln), leading to the formation of s(2)U34, the first step of tRNA-mnm(5)s(2)U34 synthesis. Sulfur is provided by IscS, via a sulfur-relay system. Binds ATP and its substrate tRNAs. The chain is tRNA-specific 2-thiouridylase MnmA from Buchnera aphidicola subsp. Schizaphis graminum (strain Sg).